The sequence spans 94 residues: MSRSVKKGPYIQEVLLKRINEMNKNGEKKVLKTWSRSSTVFPQMIGHTIAVHDGRKHVPVYITEDMVGHKLGEFVLTRTYRGHDDKSEKSSRLR.

It belongs to the universal ribosomal protein uS19 family.

Its function is as follows. Protein S19 forms a complex with S13 that binds strongly to the 16S ribosomal RNA. The sequence is that of Small ribosomal subunit protein uS19 from Clostridium botulinum (strain Hall / ATCC 3502 / NCTC 13319 / Type A).